The chain runs to 311 residues: 4-hydroxyproline 2-epimerase (311 aa).

Cysteine 89 functions as the Proton acceptor in the catalytic mechanism. Substrate-binding positions include glycine 90–histidine 91, histidine 209, and aspartate 233. Cysteine 237 acts as the Proton donor in catalysis. Glycine 238–threonine 239 is a substrate binding site.

It belongs to the proline racemase family.

It catalyses the reaction trans-4-hydroxy-L-proline = cis-4-hydroxy-D-proline. In terms of biological role, catalyzes the epimerization of trans-4-hydroxy-L-proline (t4LHyp) to cis-4-hydroxy-D-proline (c4DHyp). Is likely involved in a degradation pathway that converts t4LHyp to alpha-ketoglutarate. Displays no proline racemase activity. The sequence is that of 4-hydroxyproline 2-epimerase from Burkholderia ambifaria (strain ATCC BAA-244 / DSM 16087 / CCUG 44356 / LMG 19182 / AMMD) (Burkholderia cepacia (strain AMMD)).